A 399-amino-acid polypeptide reads, in one-letter code: Tryptophan synthase beta chain (399 aa).

Lys-92 bears the N6-(pyridoxal phosphate)lysine mark.

This sequence belongs to the TrpB family. As to quaternary structure, tetramer of two alpha and two beta chains. Pyridoxal 5'-phosphate is required as a cofactor.

The enzyme catalyses (1S,2R)-1-C-(indol-3-yl)glycerol 3-phosphate + L-serine = D-glyceraldehyde 3-phosphate + L-tryptophan + H2O. It functions in the pathway amino-acid biosynthesis; L-tryptophan biosynthesis; L-tryptophan from chorismate: step 5/5. Its function is as follows. The beta subunit is responsible for the synthesis of L-tryptophan from indole and L-serine. The chain is Tryptophan synthase beta chain from Bordetella petrii (strain ATCC BAA-461 / DSM 12804 / CCUG 43448).